We begin with the raw amino-acid sequence, 103 residues long: Large ribosomal subunit protein bL21 (103 aa).

This sequence belongs to the bacterial ribosomal protein bL21 family. In terms of assembly, part of the 50S ribosomal subunit. Contacts protein L20.

Its function is as follows. This protein binds to 23S rRNA in the presence of protein L20. This Haemophilus influenzae (strain 86-028NP) protein is Large ribosomal subunit protein bL21.